A 183-amino-acid chain; its full sequence is Bifunctional protein PyrR (183 aa).

The PRPP-binding motif lies at 98–110 (VVLVDDVLYTGRT).

It belongs to the purine/pyrimidine phosphoribosyltransferase family. PyrR subfamily.

The catalysed reaction is UMP + diphosphate = 5-phospho-alpha-D-ribose 1-diphosphate + uracil. Functionally, regulates the transcription of the pyrimidine nucleotide (pyr) operon in response to exogenous pyrimidines. Also displays a weak uracil phosphoribosyltransferase activity which is not physiologically significant. The protein is Bifunctional protein PyrR of Roseiflexus sp. (strain RS-1).